Reading from the N-terminus, the 469-residue chain is Bifunctional protein GlmU (469 aa).

Residues 1–236 (MLNIKLNIVI…ISEINGINDC (236 aa)) form a pyrophosphorylase region. Residues 11 to 14 (LAAG), lysine 25, glutamine 83, 88 to 89 (GT), 110 to 112 (YGD), glycine 147, glutamate 161, asparagine 176, and asparagine 234 contribute to the UDP-N-acetyl-alpha-D-glucosamine site. Residue aspartate 112 coordinates Mg(2+). Asparagine 234 contributes to the Mg(2+) binding site. Positions 237 to 257 (AQLANLERLYQKEQAESLLRI) are linker. Residues 258-469 (GVIIADPNRF…KKKIRYNIIY (212 aa)) form an N-acetyltransferase region. UDP-N-acetyl-alpha-D-glucosamine-binding residues include arginine 340 and lysine 358. Histidine 370 acts as the Proton acceptor in catalysis. Residues tyrosine 373 and asparagine 384 each coordinate UDP-N-acetyl-alpha-D-glucosamine. Acetyl-CoA contacts are provided by residues alanine 387, 393-394 (NY), serine 412, alanine 430, and arginine 447.

It in the N-terminal section; belongs to the N-acetylglucosamine-1-phosphate uridyltransferase family. This sequence in the C-terminal section; belongs to the transferase hexapeptide repeat family. In terms of assembly, homotrimer. It depends on Mg(2+) as a cofactor.

The protein localises to the cytoplasm. It carries out the reaction alpha-D-glucosamine 1-phosphate + acetyl-CoA = N-acetyl-alpha-D-glucosamine 1-phosphate + CoA + H(+). It catalyses the reaction N-acetyl-alpha-D-glucosamine 1-phosphate + UTP + H(+) = UDP-N-acetyl-alpha-D-glucosamine + diphosphate. Its pathway is nucleotide-sugar biosynthesis; UDP-N-acetyl-alpha-D-glucosamine biosynthesis; N-acetyl-alpha-D-glucosamine 1-phosphate from alpha-D-glucosamine 6-phosphate (route II): step 2/2. It functions in the pathway nucleotide-sugar biosynthesis; UDP-N-acetyl-alpha-D-glucosamine biosynthesis; UDP-N-acetyl-alpha-D-glucosamine from N-acetyl-alpha-D-glucosamine 1-phosphate: step 1/1. The protein operates within bacterial outer membrane biogenesis; LPS lipid A biosynthesis. Catalyzes the last two sequential reactions in the de novo biosynthetic pathway for UDP-N-acetylglucosamine (UDP-GlcNAc). The C-terminal domain catalyzes the transfer of acetyl group from acetyl coenzyme A to glucosamine-1-phosphate (GlcN-1-P) to produce N-acetylglucosamine-1-phosphate (GlcNAc-1-P), which is converted into UDP-GlcNAc by the transfer of uridine 5-monophosphate (from uridine 5-triphosphate), a reaction catalyzed by the N-terminal domain. The chain is Bifunctional protein GlmU from Baumannia cicadellinicola subsp. Homalodisca coagulata.